The following is a 174-amino-acid chain: Neuromedin-U (174 aa).

A signal peptide spans 1 to 34 (MLRTESCRPRSPAGQVAAASPLLLLLLLLAWCAG). The propeptide occupies 35-103 (ACRGAPILPQ…EQDEKDNTKR (69 aa)). Met-139 is modified (methionine sulfoxide; partial). The residue at position 166 (Asn-166) is an Asparagine amide. A propeptide spanning residues 170–174 (SAGFI) is cleaved from the precursor.

The protein belongs to the NmU family. Expressed throughout the enteric nervous system with highest levels being found in the jejunum.

It is found in the secreted. Ligand for receptors NMUR1 and NMUR2. Stimulates muscle contractions of specific regions of the gastrointestinal tract. In humans, NmU stimulates contractions of the ileum and urinary bladder. Functionally, does not function as a ligand for either NMUR1 or NMUR2. Indirectly induces prolactin release although its potency is much lower than that of neuromedin precursor-related peptide 36. Its function is as follows. Does not function as a ligand for either NMUR1 or NMUR2. Indirectly induces prolactin release from lactotroph cells in the pituitary gland, probably via the hypothalamic dopaminergic system. The protein is Neuromedin-U (NMU) of Homo sapiens (Human).